Here is a 1099-residue protein sequence, read N- to C-terminus: ATP-dependent helicase/deoxyribonuclease subunit B (1099 aa).

The [4Fe-4S] cluster site is built by C766, C1056, C1059, and C1065.

Belongs to the helicase family. AddB/RexB type 2 subfamily. As to quaternary structure, heterodimer of AddA and RexB. It depends on Mg(2+) as a cofactor. The cofactor is [4Fe-4S] cluster.

Its function is as follows. The heterodimer acts as both an ATP-dependent DNA helicase and an ATP-dependent, dual-direction single-stranded exonuclease. Recognizes the chi site generating a DNA molecule suitable for the initiation of homologous recombination. This subunit has 5' -&gt; 3' nuclease activity but not helicase activity. The chain is ATP-dependent helicase/deoxyribonuclease subunit B from Lactococcus lactis subsp. lactis (strain IL1403) (Streptococcus lactis).